Here is a 144-residue protein sequence, read N- to C-terminus: uncharacterized protein (144 aa).

Residues 1–23 (MRKILLFATVIGFLIMVSGTLSY) form the signal peptide.

This is an uncharacterized protein from Archaeoglobus fulgidus (strain ATCC 49558 / DSM 4304 / JCM 9628 / NBRC 100126 / VC-16).